A 193-amino-acid chain; its full sequence is Putative RNA methyltransferase At5g10620 (193 aa).

S-adenosyl-L-methionine-binding positions include leucine 110, glycine 142, and leucine 161 to leucine 166.

This sequence belongs to the RNA methyltransferase RlmH family.

The sequence is that of Putative RNA methyltransferase At5g10620 from Arabidopsis thaliana (Mouse-ear cress).